Consider the following 100-residue polypeptide: Aspartyl/glutamyl-tRNA(Asn/Gln) amidotransferase subunit C (100 aa).

This sequence belongs to the GatC family. As to quaternary structure, heterotrimer of A, B and C subunits.

It carries out the reaction L-glutamyl-tRNA(Gln) + L-glutamine + ATP + H2O = L-glutaminyl-tRNA(Gln) + L-glutamate + ADP + phosphate + H(+). It catalyses the reaction L-aspartyl-tRNA(Asn) + L-glutamine + ATP + H2O = L-asparaginyl-tRNA(Asn) + L-glutamate + ADP + phosphate + 2 H(+). Functionally, allows the formation of correctly charged Asn-tRNA(Asn) or Gln-tRNA(Gln) through the transamidation of misacylated Asp-tRNA(Asn) or Glu-tRNA(Gln) in organisms which lack either or both of asparaginyl-tRNA or glutaminyl-tRNA synthetases. The reaction takes place in the presence of glutamine and ATP through an activated phospho-Asp-tRNA(Asn) or phospho-Glu-tRNA(Gln). The protein is Aspartyl/glutamyl-tRNA(Asn/Gln) amidotransferase subunit C of Rickettsia bellii (strain RML369-C).